Reading from the N-terminus, the 829-residue chain is Transcription activator GutR (829 aa).

The H-T-H motif DNA-binding region spans 42 to 61; it reads IDKIALQLGVSPNTIKSWIG. An ATP-binding site is contributed by 200–207; sequence GWAGMGKT. TPR repeat units follow at residues 697 to 730, 736 to 769, and 775 to 808; these read HRVL…SSTY, IEAY…KHNA, and IYYH…IDSW.

Its function is as follows. Activator of the glucitol dehydrogenase gene (gutB). This chain is Transcription activator GutR (gutR), found in Bacillus subtilis (strain 168).